Consider the following 93-residue polypeptide: Small ribosomal subunit protein uS19 (93 aa).

It belongs to the universal ribosomal protein uS19 family.

Functionally, protein S19 forms a complex with S13 that binds strongly to the 16S ribosomal RNA. The sequence is that of Small ribosomal subunit protein uS19 from Lactobacillus helveticus (strain DPC 4571).